Here is a 417-residue protein sequence, read N- to C-terminus: NADH-quinone oxidoreductase subunit D (417 aa).

This sequence belongs to the complex I 49 kDa subunit family. As to quaternary structure, NDH-1 is composed of 14 different subunits. Subunits NuoB, C, D, E, F, and G constitute the peripheral sector of the complex.

It localises to the cell membrane. It catalyses the reaction a quinone + NADH + 5 H(+)(in) = a quinol + NAD(+) + 4 H(+)(out). Its function is as follows. NDH-1 shuttles electrons from NADH, via FMN and iron-sulfur (Fe-S) centers, to quinones in the respiratory chain. The immediate electron acceptor for the enzyme in this species is believed to be ubiquinone. Couples the redox reaction to proton translocation (for every two electrons transferred, four hydrogen ions are translocated across the cytoplasmic membrane), and thus conserves the redox energy in a proton gradient. The polypeptide is NADH-quinone oxidoreductase subunit D (Polynucleobacter asymbioticus (strain DSM 18221 / CIP 109841 / QLW-P1DMWA-1) (Polynucleobacter necessarius subsp. asymbioticus)).